The primary structure comprises 357 residues: Ribosomal RNA large subunit methyltransferase M (357 aa).

S-adenosyl-L-methionine contacts are provided by residues Ser190, Ala223 to Gly226, Asp242, Asp262, and Asp278. The active-site Proton acceptor is Lys307.

It belongs to the class I-like SAM-binding methyltransferase superfamily. RNA methyltransferase RlmE family. RlmM subfamily. In terms of assembly, monomer.

The protein resides in the cytoplasm. It carries out the reaction cytidine(2498) in 23S rRNA + S-adenosyl-L-methionine = 2'-O-methylcytidine(2498) in 23S rRNA + S-adenosyl-L-homocysteine + H(+). Its function is as follows. Catalyzes the 2'-O-methylation at nucleotide C2498 in 23S rRNA. The sequence is that of Ribosomal RNA large subunit methyltransferase M from Chromohalobacter salexigens (strain ATCC BAA-138 / DSM 3043 / CIP 106854 / NCIMB 13768 / 1H11).